The chain runs to 699 residues: Elongation factor G (699 aa).

The tr-type G domain occupies 8 to 283 (EHIRNIGICA…AVVDFLPSPI (276 aa)). GTP is bound by residues 17–24 (AHIDAGKT), 81–85 (DTPGH), and 135–138 (NKMD).

This sequence belongs to the TRAFAC class translation factor GTPase superfamily. Classic translation factor GTPase family. EF-G/EF-2 subfamily.

The protein resides in the cytoplasm. Its function is as follows. Catalyzes the GTP-dependent ribosomal translocation step during translation elongation. During this step, the ribosome changes from the pre-translocational (PRE) to the post-translocational (POST) state as the newly formed A-site-bound peptidyl-tRNA and P-site-bound deacylated tRNA move to the P and E sites, respectively. Catalyzes the coordinated movement of the two tRNA molecules, the mRNA and conformational changes in the ribosome. This is Elongation factor G from Rickettsia sibirica (strain ATCC VR-151 / 246).